Consider the following 501-residue polypeptide: Ribonuclease Y (501 aa).

The chain crosses the membrane as a helical span at residues 7–27 (LVVIALLGALTLLTAGHVLAL). A KH domain is found at 190-256 (VVRAVPLPEE…RLTLEKLVAD (67 aa)). The HD domain occupies 316-409 (VLAHLVESAH…TQAADAISGG (94 aa)).

Belongs to the RNase Y family.

The protein resides in the cell membrane. Endoribonuclease that initiates mRNA decay. This Thermobifida fusca (strain YX) protein is Ribonuclease Y.